The chain runs to 631 residues: tRNA uridine 5-carboxymethylaminomethyl modification enzyme MnmG (631 aa).

Residues 13 to 18 (GGGHAG), Val-125, and Ser-180 contribute to the FAD site. Residue 273 to 287 (GPRYCPSIEDKVMRF) coordinates NAD(+). Gln-370 is an FAD binding site.

Belongs to the MnmG family. Homodimer. Heterotetramer of two MnmE and two MnmG subunits. It depends on FAD as a cofactor.

The protein localises to the cytoplasm. NAD-binding protein involved in the addition of a carboxymethylaminomethyl (cmnm) group at the wobble position (U34) of certain tRNAs, forming tRNA-cmnm(5)s(2)U34. This Vibrio atlanticus (strain LGP32) (Vibrio splendidus (strain Mel32)) protein is tRNA uridine 5-carboxymethylaminomethyl modification enzyme MnmG.